A 2072-amino-acid chain; its full sequence is Protein still life, isoform SIF type 1 (2072 aa).

Gly2 is lipidated: N-myristoyl glycine. Positions Arg29–Ser147 constitute a WH1 domain. Disordered regions lie at residues Ser153–Cys188, Asp245–Thr284, Glu327–Asp355, Asn459–Pro486, Glu502–Ser576, Ala618–Arg655, and Ser699–Ala747. Polar residues predominate over residues Val275 to Thr284. Composition is skewed to low complexity over residues Ser338 to Thr351, Asn459 to Arg476, and Ser522 to Arg553. Polar residues predominate over residues Ala564–Ser576. The span at Ile634–Arg655 shows a compositional bias: basic and acidic residues. Polar residues predominate over residues Ser732–Gly743. Positions Thr840–Phe958 constitute a PH domain. The disordered stretch occupies residues Gly1088–Pro1119. The segment covering Ser1100–Asn1114 has biased composition (low complexity). The RBD domain maps to Lys1121–Tyr1188. The PDZ domain occupies Gln1204–Thr1293. Positions Ala1403–Ala1424 are disordered. Residues Ser1410–Ala1424 are compositionally biased toward low complexity. The region spanning Lys1436–Met1630 is the DH domain. Disordered regions lie at residues Met1803–Thr1832, His1844–Val2039, and Pro2051–Asn2072. Composition is skewed to low complexity over residues Gly1811 to Met1821 and Gln1926 to His1943. Residues His1970–Glu1984 are compositionally biased toward basic and acidic residues. A compositionally biased stretch (low complexity) spans Leu2007 to Ser2022. Polar residues predominate over residues Gln2023–Pro2032.

In terms of tissue distribution, expressed in both larval and adult brains, mainly in a subset of neurons but not in glia. In the adult eye is expressed in the two primary pigment cells in the subapical region of the eye. Also present in photoreceptors.

Its subcellular location is the synapse. Functionally, regulates synaptic differentiation through the organization of actin cytoskeleton possibly by activating Rho-like GTPases. Is likely a factor in the cascade of Rac1 or Cdc42 in the neurons. May play a role in maintaining proper septate junction functions. Required for eye development and most likely affects corneal lens-formation. This Drosophila melanogaster (Fruit fly) protein is Protein still life, isoform SIF type 1 (sif).